Reading from the N-terminus, the 620-residue chain is Glutathione-regulated potassium-efflux system protein KefC (620 aa).

12 helical membrane passes run 4-24 (HTLI…PVAV), 26-46 (LGLG…PWGL), 54-74 (AILH…GLEL), 86-106 (VFGG…GFCV), 114-134 (VALL…MQAM), 149-169 (FAVL…IPLL), 178-198 (ASAF…VVLL), 218-238 (VFSA…EEAG), 271-291 (LLLG…TLVA), 296-316 (VLTL…LVAK), 326-346 (RWFA…FGAA), and 359-379 (ALTL…VLLT). The region spanning 399–518 (QPRVIIAGFG…AGVAQPERET (120 aa)) is the RCK N-terminal domain. The disordered stretch occupies residues 596–620 (HGWQGTREGKHTGNDADEPEVKPQP).

Belongs to the monovalent cation:proton antiporter 2 (CPA2) transporter (TC 2.A.37) family. KefC subfamily. As to quaternary structure, homodimer. Interacts with the regulatory subunit KefF.

It is found in the cell inner membrane. Pore-forming subunit of a potassium efflux system that confers protection against electrophiles. Catalyzes K(+)/H(+) antiport. This Cronobacter sakazakii (strain ATCC BAA-894) (Enterobacter sakazakii) protein is Glutathione-regulated potassium-efflux system protein KefC.